The following is a 506-amino-acid chain: Conglutin alpha 1 (506 aa).

Residues 1 to 19 (MANKLLALSLFLLFSGCFA) form the signal peptide. 2 disulfides stabilise this stretch: Cys-31–Cys-64 and Cys-107–Cys-328. One can recognise a Cupin type-1 1 domain in the interval 36 to 235 (LNALEPDNSV…AFSVDREIVR (200 aa)). Disordered regions lie at residues 111–131 (YEEP…RHQK), 195–216 (QQKE…NVLS), and 251–322 (VKEG…DRNG). A compositionally biased stretch (low complexity) spans 195 to 207 (QQKEGGQGQQQEG). Positions 270 to 280 (EEEEEEEEEEE) are enriched in acidic residues. The segment covering 306-315 (QVRRVRRPHH) has biased composition (basic residues). The Cupin type-1 2 domain occupies 334–483 (HNIGQSTSPD…AFNLDRDQAR (150 aa)). Asn-397 and Asn-439 each carry an N-linked (GlcNAc...) asparagine glycan.

This sequence belongs to the 11S seed storage protein (globulins) family. Hexamer; each subunit is composed of an acidic and a basic chain derived from a single precursor and linked by a disulfide bond. Component of globulins complexes which accumulate in seeds. In terms of tissue distribution, expressed in developing cotyledons and in the embryonic axis of germinating seeds.

Sulfur-rich seed storage protein. This protein found in the seeds of many leguminous and non-leguminous plants is the source of sulfur-containing amino acids in seed meals. The sequence is that of Conglutin alpha 1 from Lupinus angustifolius (Narrow-leaved blue lupine).